Here is a 146-residue protein sequence, read N- to C-terminus: Hemoglobin subunit beta (146 aa).

Valine 1 is modified (N-acetylvaline). A Globin domain is found at 2 to 146; the sequence is HLSGEEKACV…VANALAHKYH (145 aa). A Phosphothreonine modification is found at threonine 12. Serine 44 carries the post-translational modification Phosphoserine. Lysine 59 is subject to N6-acetyllysine. Histidine 63 contributes to the heme b binding site. Lysine 82 carries the post-translational modification N6-acetyllysine. Histidine 92 is a heme b binding site. Cysteine 93 bears the S-nitrosocysteine mark. Lysine 144 carries the N6-acetyllysine modification.

Belongs to the globin family. Heterotetramer of two alpha chains and two beta chains. Red blood cells.

In terms of biological role, involved in oxygen transport from the lung to the various peripheral tissues. The polypeptide is Hemoglobin subunit beta (HBB) (Suncus murinus (Asian house shrew)).